A 145-amino-acid polypeptide reads, in one-letter code: MIIVKLFTCLLMVSSVLTLNDVRYKYYKTEKVGNKCRYNMFSYLENDESIYEDRLCKMYTCHIMEDDALMQHSMCKLPKGFREGCTVESKTGRFPYCCLNRKMSCPPEERNDDFNVVSVKGPKFPRNKSNDKFKNLSVKNCPCLE.

The first 18 residues, 1–18 (MIIVKLFTCLLMVSSVLT), serve as a signal peptide directing secretion.

In terms of processing, contains 5 disulfide bonds. As to expression, expressed by the venom gland.

The protein resides in the secreted. The protein is Venom protein 30.1 of Lychas mucronatus (Chinese swimming scorpion).